Consider the following 452-residue polypeptide: uncharacterized protein (452 aa).

This is an uncharacterized protein from Chlamydia pneumoniae (Chlamydophila pneumoniae).